A 141-amino-acid chain; its full sequence is Nucleoside diphosphate kinase (141 aa).

Positions 11, 59, 87, 93, 104, and 114 each coordinate ATP. His-117 acts as the Pros-phosphohistidine intermediate in catalysis.

This sequence belongs to the NDK family. In terms of assembly, homotetramer. Mg(2+) is required as a cofactor.

The protein localises to the cytoplasm. It catalyses the reaction a 2'-deoxyribonucleoside 5'-diphosphate + ATP = a 2'-deoxyribonucleoside 5'-triphosphate + ADP. It carries out the reaction a ribonucleoside 5'-diphosphate + ATP = a ribonucleoside 5'-triphosphate + ADP. Its function is as follows. Major role in the synthesis of nucleoside triphosphates other than ATP. The ATP gamma phosphate is transferred to the NDP beta phosphate via a ping-pong mechanism, using a phosphorylated active-site intermediate. In Pseudomonas syringae pv. tomato (strain ATCC BAA-871 / DC3000), this protein is Nucleoside diphosphate kinase.